We begin with the raw amino-acid sequence, 309 residues long: Polyprenal reductase (309 aa).

Residues 1–3 (MFH) are Cytoplasmic-facing. The chain crosses the membrane as a helical span at residues 4–24 (ILSIVNIIWLLLALCFGAAFC). Over 25 to 67 (LNKFSVKLPNRVEHVFQDFIRYGKTKENIKRASWQLVFDLSKR) the chain is Lumenal. Residues 68 to 88 (YFYHFYVVSVMWNGLLLLFSI) form a helical membrane-spanning segment. Residues 89 to 114 (RSVVMSEAFPDWIIDVLGSLTGRSRG) are Cytoplasmic-facing. The helical transmembrane segment at 115–135 (AWNEIHLSTLLLQVLLWVHTL) threads the bilayer. The Lumenal segment spans residues 136–150 (RRLLECLFVSVFSDG). The helical transmembrane segment at 151–171 (VINVVQYAFGLSYYIILGLTV) threads the bilayer. Topologically, residues 172–185 (LCTNDSLPQSESVS) are cytoplasmic. A helical membrane pass occupies residues 186–206 (FFNQLTWYHVVGTLLFFWASF). Residues 207-255 (LQHQSLSLLAKMRTDSSGKVETLAHKMPCGGWFELVSCPHYLAELLIYA) lie on the Lumenal side of the membrane. Residues 256 to 276 (AMCVCCGCASLTWWMVVLYVL) traverse the membrane as a helical segment. The Cytoplasmic portion of the chain corresponds to 277–309 (CNQALAAQLCHEYYRSKFKTYPHHRKAFIPFVL).

The protein belongs to the steroid 5-alpha reductase family. Polyprenal reductase subfamily.

The protein localises to the endoplasmic reticulum membrane. The enzyme catalyses a di-trans,poly-cis-dolichal + NADP(+) = a di-trans,poly-cis-polyprenal + NADPH + H(+). It carries out the reaction a 3-oxo-5alpha-steroid + NADP(+) = a 3-oxo-Delta(4)-steroid + NADPH + H(+). It catalyses the reaction androst-4-ene-3,17-dione + NADPH + H(+) = 5alpha-androstan-3,17-dione + NADP(+). The catalysed reaction is 17beta-hydroxy-5alpha-androstan-3-one + NADP(+) = testosterone + NADPH + H(+). It participates in protein modification; protein glycosylation. Plays a key role in early steps of protein N-linked glycosylation by being involved in the conversion of polyprenol into dolichol. Acts as a polyprenal reductase that mediates the reduction of polyprenal into dolichal in a NADP-dependent mechanism. Dolichols are required for the synthesis of dolichol-linked monosaccharides and the oligosaccharide precursor used for N-glycosylation. Also able to convert testosterone (T) into 5-alpha-dihydrotestosterone (DHT). This chain is Polyprenal reductase (srd5a3), found in Danio rerio (Zebrafish).